A 103-amino-acid polypeptide reads, in one-letter code: UPF0145 protein BCE_5284 (103 aa).

The protein belongs to the UPF0145 family.

The polypeptide is UPF0145 protein BCE_5284 (Bacillus cereus (strain ATCC 10987 / NRS 248)).